Reading from the N-terminus, the 1248-residue chain is Reverse gyrase 1 (1248 aa).

Residues 7 to 44 form an RG N-terminal-type zinc finger; sequence IPPSIYLFSCPNCGRSISTYRLLLGSVCNICLEEDKEY. Cysteine 16, cysteine 19, cysteine 34, and cysteine 37 together coordinate Zn(2+). Residues glutamine 92 and 109 to 116 each bind ATP; that span reads APPGLGKT. Positions 96–262 constitute a Helicase ATP-binding domain; it reads IYRLLSGESF…KKYRENTQKN (167 aa). A DEAD box motif is present at residues 219-222; the sequence is DDVD. Residues 621 to 1248 are topoisomerase I; it reads QKVKTVLLVV…QVYEEINEIR (628 aa). The 165-residue stretch at 625-789 folds into the Toprim domain; it reads TVLLVVESPN…NIRRAEFHEV (165 aa). Glutamate 631 serves as a coordination point for Mg(2+). Residues 706 to 735 form an RG C-terminal-type; atypical zinc finger; that stretch reads IKKCENNHQFTDFFESNKCPRCMTTKVRYD. Residues cysteine 709, histidine 713, cysteine 724, and cysteine 727 each coordinate Zn(2+). Residue aspartate 758 participates in Mg(2+) binding. The 444-residue stretch at 805 to 1248 folds into the Topo IA-type catalytic domain; it reads NVNLVKSQLV…QVYEEINEIR (444 aa). The active-site O-(5'-phospho-DNA)-tyrosine intermediate is the tyrosine 965.

This sequence in the N-terminal section; belongs to the DEAD box helicase family. DDVD subfamily. It in the C-terminal section; belongs to the type IA topoisomerase family. Monomer. Zn(2+) serves as cofactor. Requires Mg(2+) as cofactor. In terms of processing, the N-terminus is blocked.

It localises to the cytoplasm. It carries out the reaction ATP + H2O = ADP + phosphate + H(+). Modifies the topological state of DNA by introducing positive supercoils in an ATP-dependent process. Increases the linking number in steps of +1. Has a DNA-stimulated ATPase activity; closed circular ssDNA stimulates ATPase much better than dsDNA although negative supercoiled, positive supercoiled and relaxed dsDNA all stimulate ATPase activity. All NTPs permit topoisomerization (relaxation) of negatively supercoiled dsDNA without nucleotide hydrolysis. It transiently cleaves a single DNA strand and remains covalently bound to the 5' DNA end. Acts via a tyrosine residue. Reverse gyrase binds and unwinds DNA independently of ATP binding and DNA cleavage. May be involved in rewinding the DNA strands in the regions of the chromosome that have opened up to allow transcription or replication, probably acts via ssDNA regions of the chromosome. This is Reverse gyrase 1 from Sulfolobus acidocaldarius (strain ATCC 33909 / DSM 639 / JCM 8929 / NBRC 15157 / NCIMB 11770).